Reading from the N-terminus, the 1061-residue chain is Calcium-transporting ATPase 4, endoplasmic reticulum-type (1061 aa).

A disordered region spans residues 1-21 (MGKGGEDCGNKQTNSSELVKS). Topologically, residues 1–70 (MGKGGEDCGN…NELEKPEGTS (70 aa)) are cytoplasmic. A helical transmembrane segment spans residues 71–91 (IFKLILEQFNDTLVRILLAAA). The Lumenal segment spans residues 92–115 (VISFVLAFFDGDEGGEMGITAFVE). The helical transmembrane segment at 116–135 (PLVIFLILIVNAIVGIWQET) threads the bilayer. At 136–278 (NAEKALEALK…EEDTPLKKKL (143 aa)) the chain is on the cytoplasmic side. The chain crosses the membrane as a helical span at residues 279–298 (NEFGEVLTMIIGLICALVWL). The Lumenal portion of the chain corresponds to 299–327 (INVKYFLSWEYVDGWPRNFKFSFEKCTYY). A helical membrane pass occupies residues 328–345 (FEIAVALAVAAIPEGLPA). The Ca(2+) site is built by V336, A337, I339, and E341. Residues 346–786 (VITTCLALGT…GEGRSIYNNM (441 aa)) are Cytoplasmic-facing. Residue D383 is the 4-aspartylphosphate intermediate of the active site. The Mg(2+) site is built by D731 and D735. Residues 787–806 (KAFIRYMISSNIGEVASIFL) form a helical membrane-spanning segment. 2 residues coordinate Ca(2+): N797 and E800. Residues 807–816 (TAALGIPEGM) lie on the Lumenal side of the membrane. A helical membrane pass occupies residues 817–837 (IPVQLLWVNLVTDGPPATALG). 3 residues coordinate Ca(2+): N825, T828, and D829. Residues 838–857 (FNPPDKDIMKKPPRRSDDSL) are Cytoplasmic-facing. The helical transmembrane segment at 858 to 880 (ITAWILFRYMVIGLYVGVATVGV) threads the bilayer. At 881-950 (FIIWYTHNSF…YFQQGKIKAS (70 aa)) the chain is on the lumenal side. A helical transmembrane segment spans residues 951 to 970 (TLSLSVLVAIEMFNSLNALS). Residue E961 participates in Ca(2+) binding. The Cytoplasmic segment spans residues 971–983 (EDGSLVTMPPWVN). A helical membrane pass occupies residues 984 to 1002 (PWLLLAMAVSFGLHFVILY). Over 1003–1017 (VPFLAQVFGIVPLSL) the chain is Lumenal. The helical transmembrane segment at 1018-1038 (NEWLLVLAVSLPVILIDEVLK) threads the bilayer. Topologically, residues 1039-1061 (FVGRCTSGYRYSPRTPSAKQKEE) are cytoplasmic.

It belongs to the cation transport ATPase (P-type) (TC 3.A.3) family. Type IIA subfamily.

The protein localises to the membrane. The enzyme catalyses Ca(2+)(in) + ATP + H2O = Ca(2+)(out) + ADP + phosphate + H(+). This magnesium-dependent enzyme catalyzes the hydrolysis of ATP coupled with the translocation of calcium from the cytosol to an endomembrane compartment. The chain is Calcium-transporting ATPase 4, endoplasmic reticulum-type (ECA4) from Arabidopsis thaliana (Mouse-ear cress).